Reading from the N-terminus, the 268-residue chain is Movement protein (268 aa).

Positions 218 to 246 (SDVRKGKISSSDRSAPNKNYRNVKDFGGM) are disordered. Over residues 225-237 (ISSSDRSAPNKNY) the composition is skewed to polar residues.

This sequence belongs to the tobamovirus movement protein family. In terms of assembly, binds to host RBCS at the plasmodesmata; this interaction seems required for viral systemic movement. In resistant plants, interacts with host MBP2C at host microtubules; this interaction prevents virus cell to cell movement. In resistant plants, interacts with host resistance (R) protein (e.g. tomato ToMV resistance protein TM-2(2), AC Q71BG9) at the host plasma membrane; this interaction triggers host defense responses leading to programmed cell death.

The protein localises to the host cytoplasm. It localises to the host cytoskeleton. The protein resides in the host cell junction. It is found in the host plasmodesma. Its function is as follows. Transports viral genome to neighboring plant cells directly through plasmosdesmata, without any budding. The movement protein allows efficient cell to cell propagation, by bypassing the host cell wall barrier. Forms a ribonucleoprotein complex with viral RNA. Binds microtubules and modulates microtubule stability. Can bind double-stranded DNA. Triggers host hypersensitive defense reaction in incompatible plants harboring resistance (R) proteins. The polypeptide is Movement protein (MP) (Nicotiana tabacum (Common tobacco)).